Consider the following 151-residue polypeptide: Large ribosomal subunit protein uL15 (151 aa).

A disordered region spans residues 1–62; that stretch reads MVKLNELFPK…GGQMPLYRRV (62 aa). Residues 11–20 show a composition bias toward basic residues; that stretch reads HGSRKAKRRI.

Belongs to the universal ribosomal protein uL15 family. In terms of assembly, part of the 50S ribosomal subunit.

Binds to the 23S rRNA. The chain is Large ribosomal subunit protein uL15 from Elusimicrobium minutum (strain Pei191).